Here is a 465-residue protein sequence, read N- to C-terminus: Fumarate hydratase class II (465 aa).

Substrate contacts are provided by residues 100 to 102 (SGT), 131 to 134 (HPND), 141 to 143 (SSN), and threonine 189. Histidine 190 serves as the catalytic Proton donor/acceptor. Residue serine 320 is part of the active site. Substrate-binding positions include serine 321 and 326 to 328 (KVN).

The protein belongs to the class-II fumarase/aspartase family. Fumarase subfamily. Homotetramer.

The protein localises to the cytoplasm. It catalyses the reaction (S)-malate = fumarate + H2O. Its pathway is carbohydrate metabolism; tricarboxylic acid cycle; (S)-malate from fumarate: step 1/1. Functionally, involved in the TCA cycle. Catalyzes the stereospecific interconversion of fumarate to L-malate. In Mesorhizobium japonicum (strain LMG 29417 / CECT 9101 / MAFF 303099) (Mesorhizobium loti (strain MAFF 303099)), this protein is Fumarate hydratase class II.